Consider the following 238-residue polypeptide: Probable 2-phosphosulfolactate phosphatase (238 aa).

The protein belongs to the ComB family. The cofactor is Mg(2+).

It catalyses the reaction (2R)-O-phospho-3-sulfolactate + H2O = (2R)-3-sulfolactate + phosphate. The protein is Probable 2-phosphosulfolactate phosphatase of Clostridium botulinum (strain Alaska E43 / Type E3).